A 391-amino-acid polypeptide reads, in one-letter code: Formate-dependent phosphoribosylglycinamide formyltransferase (391 aa).

N(1)-(5-phospho-beta-D-ribosyl)glycinamide-binding positions include 20–21 (EL) and Glu-80. ATP-binding positions include Arg-112, Lys-153, 158 to 163 (SSGKGQ), 193 to 196 (EGFV), and Glu-201. The region spanning 117-306 (RLAAEELQLP…EFALHVRAFT (190 aa)) is the ATP-grasp domain. Mg(2+)-binding residues include Glu-265 and Glu-277. N(1)-(5-phospho-beta-D-ribosyl)glycinamide-binding positions include Asp-284, Lys-354, and 361-362 (RR).

Belongs to the PurK/PurT family. In terms of assembly, homodimer.

The enzyme catalyses N(1)-(5-phospho-beta-D-ribosyl)glycinamide + formate + ATP = N(2)-formyl-N(1)-(5-phospho-beta-D-ribosyl)glycinamide + ADP + phosphate + H(+). It participates in purine metabolism; IMP biosynthesis via de novo pathway; N(2)-formyl-N(1)-(5-phospho-D-ribosyl)glycinamide from N(1)-(5-phospho-D-ribosyl)glycinamide (formate route): step 1/1. Involved in the de novo purine biosynthesis. Catalyzes the transfer of formate to 5-phospho-ribosyl-glycinamide (GAR), producing 5-phospho-ribosyl-N-formylglycinamide (FGAR). Formate is provided by PurU via hydrolysis of 10-formyl-tetrahydrofolate. In Aliivibrio fischeri (strain ATCC 700601 / ES114) (Vibrio fischeri), this protein is Formate-dependent phosphoribosylglycinamide formyltransferase.